A 226-amino-acid chain; its full sequence is Cytidylate kinase (226 aa).

Residue 12–20 coordinates ATP; that stretch reads GPSGAGKGT.

Belongs to the cytidylate kinase family. Type 1 subfamily.

It localises to the cytoplasm. The catalysed reaction is CMP + ATP = CDP + ADP. The enzyme catalyses dCMP + ATP = dCDP + ADP. This Vibrio parahaemolyticus serotype O3:K6 (strain RIMD 2210633) protein is Cytidylate kinase.